The following is a 262-amino-acid chain: Thiazole synthase (262 aa).

Lysine 97 serves as the catalytic Schiff-base intermediate with DXP. Residues glycine 158, 185 to 186 (AG), and 207 to 208 (NT) contribute to the 1-deoxy-D-xylulose 5-phosphate site. The tract at residues 243–262 (DKAQASTPTVGQPFWHSAEY) is disordered.

It belongs to the ThiG family. In terms of assembly, homotetramer. Forms heterodimers with either ThiH or ThiS.

Its subcellular location is the cytoplasm. It catalyses the reaction [ThiS sulfur-carrier protein]-C-terminal-Gly-aminoethanethioate + 2-iminoacetate + 1-deoxy-D-xylulose 5-phosphate = [ThiS sulfur-carrier protein]-C-terminal Gly-Gly + 2-[(2R,5Z)-2-carboxy-4-methylthiazol-5(2H)-ylidene]ethyl phosphate + 2 H2O + H(+). It participates in cofactor biosynthesis; thiamine diphosphate biosynthesis. In terms of biological role, catalyzes the rearrangement of 1-deoxy-D-xylulose 5-phosphate (DXP) to produce the thiazole phosphate moiety of thiamine. Sulfur is provided by the thiocarboxylate moiety of the carrier protein ThiS. In vitro, sulfur can be provided by H(2)S. The sequence is that of Thiazole synthase from Neisseria meningitidis serogroup A / serotype 4A (strain DSM 15465 / Z2491).